The following is a 384-amino-acid chain: O-phospho-L-seryl-tRNA:Cys-tRNA synthase 1 (384 aa).

Pyridoxal 5'-phosphate is bound by residues 88–89 (AR), Asn195, and 218–220 (SGH). Lys221 carries the N6-(pyridoxal phosphate)lysine modification.

The protein belongs to the SepCysS family. In terms of assembly, homodimer. Interacts with SepRS. Requires pyridoxal 5'-phosphate as cofactor.

The enzyme catalyses O-phospho-L-seryl-tRNA(Cys) + hydrogen sulfide + H(+) = L-cysteinyl-tRNA(Cys) + phosphate. Functionally, converts O-phospho-L-seryl-tRNA(Cys) (Sep-tRNA(Cys)) to L-cysteinyl-tRNA(Cys) (Cys-tRNA(Cys)). The sequence is that of O-phospho-L-seryl-tRNA:Cys-tRNA synthase 1 from Methanocella arvoryzae (strain DSM 22066 / NBRC 105507 / MRE50).